A 444-amino-acid chain; its full sequence is Xylose isomerase (444 aa).

Active-site residues include His-101 and Asp-104. Mg(2+) contacts are provided by Glu-232, Glu-268, His-271, Asp-296, Asp-307, Asp-309, and Asp-339.

This sequence belongs to the xylose isomerase family. Homotetramer. Requires Mg(2+) as cofactor.

Its subcellular location is the cytoplasm. It carries out the reaction alpha-D-xylose = alpha-D-xylulofuranose. This is Xylose isomerase from Thermotoga maritima (strain ATCC 43589 / DSM 3109 / JCM 10099 / NBRC 100826 / MSB8).